The primary structure comprises 555 residues: Dihydroxy-acid dehydratase (555 aa).

Asp78 contributes to the Mg(2+) binding site. Cys119 provides a ligand contact to [2Fe-2S] cluster. The Mg(2+) site is built by Asp120 and Lys121. Lys121 carries the post-translational modification N6-carboxylysine. Cys195 is a [2Fe-2S] cluster binding site. A Mg(2+)-binding site is contributed by Glu444. Ser470 acts as the Proton acceptor in catalysis.

Belongs to the IlvD/Edd family. As to quaternary structure, homodimer. It depends on [2Fe-2S] cluster as a cofactor. The cofactor is Mg(2+).

It catalyses the reaction (2R)-2,3-dihydroxy-3-methylbutanoate = 3-methyl-2-oxobutanoate + H2O. It carries out the reaction (2R,3R)-2,3-dihydroxy-3-methylpentanoate = (S)-3-methyl-2-oxopentanoate + H2O. The protein operates within amino-acid biosynthesis; L-isoleucine biosynthesis; L-isoleucine from 2-oxobutanoate: step 3/4. Its pathway is amino-acid biosynthesis; L-valine biosynthesis; L-valine from pyruvate: step 3/4. In terms of biological role, functions in the biosynthesis of branched-chain amino acids. Catalyzes the dehydration of (2R,3R)-2,3-dihydroxy-3-methylpentanoate (2,3-dihydroxy-3-methylvalerate) into 2-oxo-3-methylpentanoate (2-oxo-3-methylvalerate) and of (2R)-2,3-dihydroxy-3-methylbutanoate (2,3-dihydroxyisovalerate) into 2-oxo-3-methylbutanoate (2-oxoisovalerate), the penultimate precursor to L-isoleucine and L-valine, respectively. This Dehalococcoides mccartyi (strain CBDB1) protein is Dihydroxy-acid dehydratase.